The sequence spans 163 residues: Cyclic pyranopterin monophosphate synthase (163 aa).

Substrate contacts are provided by residues L79–H81 and M117–E118. The active site involves D132.

It belongs to the MoaC family. Homohexamer; trimer of dimers.

The enzyme catalyses (8S)-3',8-cyclo-7,8-dihydroguanosine 5'-triphosphate = cyclic pyranopterin phosphate + diphosphate. It functions in the pathway cofactor biosynthesis; molybdopterin biosynthesis. Its function is as follows. Catalyzes the conversion of (8S)-3',8-cyclo-7,8-dihydroguanosine 5'-triphosphate to cyclic pyranopterin monophosphate (cPMP). The protein is Cyclic pyranopterin monophosphate synthase of Chloroflexus aurantiacus (strain ATCC 29366 / DSM 635 / J-10-fl).